The chain runs to 388 residues: Succinate--CoA ligase [ADP-forming] subunit beta (388 aa).

The region spanning 9–244 (KQLFAEYGLP…PSQDDPREAH (236 aa)) is the ATP-grasp domain. Residues Lys46, 53–55 (GRG), Glu99, Thr102, and Glu107 contribute to the ATP site. Residues Asn199 and Asp213 each coordinate Mg(2+). Residues Asn264 and 321–323 (GIV) each bind substrate.

The protein belongs to the succinate/malate CoA ligase beta subunit family. In terms of assembly, heterotetramer of two alpha and two beta subunits. The cofactor is Mg(2+).

The enzyme catalyses succinate + ATP + CoA = succinyl-CoA + ADP + phosphate. The catalysed reaction is GTP + succinate + CoA = succinyl-CoA + GDP + phosphate. It participates in carbohydrate metabolism; tricarboxylic acid cycle; succinate from succinyl-CoA (ligase route): step 1/1. Succinyl-CoA synthetase functions in the citric acid cycle (TCA), coupling the hydrolysis of succinyl-CoA to the synthesis of either ATP or GTP and thus represents the only step of substrate-level phosphorylation in the TCA. The beta subunit provides nucleotide specificity of the enzyme and binds the substrate succinate, while the binding sites for coenzyme A and phosphate are found in the alpha subunit. This chain is Succinate--CoA ligase [ADP-forming] subunit beta, found in Ectopseudomonas mendocina (strain ymp) (Pseudomonas mendocina).